The sequence spans 242 residues: Transcription factor bHLH100 (242 aa).

Residues 61 to 113 enclose the bHLH domain; it reads MKKLNHNASERERRKKINTMFSSLRSCLPPTNQTKKLSVSATVSQALKYIPEL.

In terms of assembly, homodimer. As to expression, expressed constitutively in roots, leaves, and stems.

It localises to the nucleus. Functionally, plays a role in metal homeostasis. Confers tolerance to high zinc (Zn) and nickel (Ni). The chain is Transcription factor bHLH100 (BHLH100) from Arabidopsis thaliana (Mouse-ear cress).